Here is a 772-residue protein sequence, read N- to C-terminus: NAD(P)H-quinone oxidoreductase subunit 5, chloroplastic (772 aa).

The next 16 membrane-spanning stretches (helical) occupy residues 9 to 29 (WIIP…LLLF), 40 to 60 (WSFP…YLSI), 89 to 109 (IDPL…LVLF), 125 to 145 (FAYL…SNLI), 147 to 167 (IYIF…FWFT), 185 to 205 (GDFG…SFEF), 220 to 240 (NQVH…GAVA), 259 to 279 (TPIS…FLVA), 290 to 312 (YIMN…LALA), 328 to 348 (LGYM…FHLI), 355 to 375 (ALLF…VGYS), 397 to 417 (TAFL…CFWS), 426 to 446 (WLYS…TAFY), 550 to 570 (LFSL…GIPF), 604 to 624 (FVTN…IATF), and 731 to 751 (IFIF…FFVL).

The protein belongs to the complex I subunit 5 family. As to quaternary structure, NDH is composed of at least 16 different subunits, 5 of which are encoded in the nucleus.

It localises to the plastid. It is found in the chloroplast thylakoid membrane. The catalysed reaction is a plastoquinone + NADH + (n+1) H(+)(in) = a plastoquinol + NAD(+) + n H(+)(out). It carries out the reaction a plastoquinone + NADPH + (n+1) H(+)(in) = a plastoquinol + NADP(+) + n H(+)(out). In terms of biological role, NDH shuttles electrons from NAD(P)H:plastoquinone, via FMN and iron-sulfur (Fe-S) centers, to quinones in the photosynthetic chain and possibly in a chloroplast respiratory chain. The immediate electron acceptor for the enzyme in this species is believed to be plastoquinone. Couples the redox reaction to proton translocation, and thus conserves the redox energy in a proton gradient. This chain is NAD(P)H-quinone oxidoreductase subunit 5, chloroplastic (ndhF), found in Oenothera argillicola (Appalachian evening primrose).